A 69-amino-acid chain; its full sequence is Sodium channel toxin (69 aa).

Residues 2 to 66 (KNDYPVDTAK…SPTKTSGRCN (65 aa)) form the LCN-type CS-alpha/beta domain. 4 disulfide bridges follow: C14–C65, C18–C41, C27–C48, and C31–C50.

The protein belongs to the long (4 C-C) scorpion toxin superfamily. Sodium channel inhibitor family. Expressed by the venom gland.

It localises to the secreted. Inhibits voltage-gated sodium channels (Nav). The sequence is that of Sodium channel toxin from Tityus metuendus (Scorpion).